A 425-amino-acid polypeptide reads, in one-letter code: tRNA(Ile)-lysidine synthase (425 aa).

27–32 (SGGLDS) serves as a coordination point for ATP.

Belongs to the tRNA(Ile)-lysidine synthase family.

It is found in the cytoplasm. It carries out the reaction cytidine(34) in tRNA(Ile2) + L-lysine + ATP = lysidine(34) in tRNA(Ile2) + AMP + diphosphate + H(+). Its function is as follows. Ligates lysine onto the cytidine present at position 34 of the AUA codon-specific tRNA(Ile) that contains the anticodon CAU, in an ATP-dependent manner. Cytidine is converted to lysidine, thus changing the amino acid specificity of the tRNA from methionine to isoleucine. The protein is tRNA(Ile)-lysidine synthase of Streptococcus pneumoniae (strain Hungary19A-6).